Here is a 76-residue protein sequence, read N- to C-terminus: Acyl carrier protein (76 aa).

Residues 1–76 (MAIFDDIKEV…DVVRYIETNK (76 aa)) form the Carrier domain. The residue at position 36 (serine 36) is an O-(pantetheine 4'-phosphoryl)serine.

The protein belongs to the acyl carrier protein (ACP) family. In terms of processing, 4'-phosphopantetheine is transferred from CoA to a specific serine of apo-ACP by AcpS. This modification is essential for activity because fatty acids are bound in thioester linkage to the sulfhydryl of the prosthetic group.

The protein localises to the cytoplasm. It participates in lipid metabolism; fatty acid biosynthesis. Functionally, carrier of the growing fatty acid chain in fatty acid biosynthesis. The protein is Acyl carrier protein of Wolinella succinogenes (strain ATCC 29543 / DSM 1740 / CCUG 13145 / JCM 31913 / LMG 7466 / NCTC 11488 / FDC 602W) (Vibrio succinogenes).